We begin with the raw amino-acid sequence, 556 residues long: MSVSAFNRRWAAVILEALTRHGVRHVCIAPGSRSTPLTLAAAENPAFIHHTHFDERGLGHLALGLAKVSQQPVAVIVTSGTAVANLYPALIEAGLTGEKLILLTADRPPELIDCGANQAIRQAGMFASHPSQTLSLPRPTQDIPARWLVSTIDNALAMLHAGALHINCPFAEPLYGDMNDTGLVWQQRLGDWWQDEKPWLREARRLESDKQRDWFFWRQKRGVVVAGRMSAEEGKKVAQWAQTLGWPLIGDVLSQTGQPLPCADLWLGNAKAVTELQQAQIVVQLGSSLTGKRLLQWQATCEPEEYWVIDNIEGRLDPAHHRGRRLVAKIADWLELHPAEKRKPWCVEIPRLAELAWQRVVAQRDTFGEAQLAHRIRDYLPEQGQLFVGNSLVVRLIDALSQLPAGYPVYSNRGASGIDGLLSTAAGVQRASAKSTLAIVGDLSALYDLNALALLRQVSAPFVLIVVNNNGGQIFSLLPTPQSKRERFYLMPQNVHFDHAAAMFNLRYHRPENWEELESALAGAWRTPAATVIELVVNDTDGAQTLQQLLAQVSHL.

The protein belongs to the TPP enzyme family. MenD subfamily. Homodimer. It depends on Mg(2+) as a cofactor. The cofactor is Mn(2+). Thiamine diphosphate is required as a cofactor.

It catalyses the reaction isochorismate + 2-oxoglutarate + H(+) = 5-enolpyruvoyl-6-hydroxy-2-succinyl-cyclohex-3-ene-1-carboxylate + CO2. Its pathway is quinol/quinone metabolism; 1,4-dihydroxy-2-naphthoate biosynthesis; 1,4-dihydroxy-2-naphthoate from chorismate: step 2/7. The protein operates within quinol/quinone metabolism; menaquinone biosynthesis. In terms of biological role, catalyzes the thiamine diphosphate-dependent decarboxylation of 2-oxoglutarate and the subsequent addition of the resulting succinic semialdehyde-thiamine pyrophosphate anion to isochorismate to yield 2-succinyl-5-enolpyruvyl-6-hydroxy-3-cyclohexene-1-carboxylate (SEPHCHC). The chain is 2-succinyl-5-enolpyruvyl-6-hydroxy-3-cyclohexene-1-carboxylate synthase from Salmonella choleraesuis (strain SC-B67).